A 430-amino-acid chain; its full sequence is Aspartate aminotransferase, mitochondrial (430 aa).

The transit peptide at 1–29 directs the protein to the mitochondrion; the sequence is MALLHSARVLSGVASAFHPGLAAAASARA. At T48 the chain carries Phosphothreonine. K59 carries the post-translational modification N6-acetyllysine. Substrate is bound at residue G65. N6-acetyllysine; alternate is present on K73. Position 73 is an N6-succinyllysine; alternate (K73). An N6-acetyllysine modification is found at K82. An N6-acetyllysine; alternate modification is found at K90. Position 90 is an N6-succinyllysine; alternate (K90). Y96 is subject to 3'-nitrotyrosine; alternate. A Phosphotyrosine; alternate modification is found at Y96. K122 is modified (N6-acetyllysine; alternate). Position 122 is an N6-succinyllysine; alternate (K122). Residue S143 is modified to Phosphoserine. K159 is subject to N6-acetyllysine; alternate. Residue K159 is modified to N6-succinyllysine; alternate. Substrate is bound at residue W162. K185 carries the N6-acetyllysine; alternate modification. K185 bears the N6-succinyllysine; alternate mark. N215 is a substrate binding site. K227 is modified (N6-succinyllysine). K234 carries the N6-acetyllysine modification. An N6-acetyllysine; alternate mark is found at K279 and K296. N6-(pyridoxal phosphate)lysine; alternate is present on K279. K296 bears the N6-succinyllysine; alternate mark. Position 302 is an N6-acetyllysine (K302). K309 carries the N6-acetyllysine; alternate modification. K309 carries the post-translational modification N6-succinyllysine; alternate. The residue at position 313 (R313) is an Asymmetric dimethylarginine. Position 338 is an N6-acetyllysine; alternate (K338). K338 is subject to N6-succinyllysine; alternate. Residue K345 is modified to N6-acetyllysine. Residue K363 is modified to N6-acetyllysine; alternate. K363 is modified (N6-succinyllysine; alternate). N6-acetyllysine is present on residues K364 and K387. N6-acetyllysine; alternate occurs at positions 396 and 404. Residues K396 and K404 each carry the N6-succinyllysine; alternate modification. R407 is a binding site for substrate.

The protein belongs to the class-I pyridoxal-phosphate-dependent aminotransferase family. Homodimer. Pyridoxal 5'-phosphate is required as a cofactor.

The protein localises to the mitochondrion matrix. It localises to the cell membrane. The catalysed reaction is L-aspartate + 2-oxoglutarate = oxaloacetate + L-glutamate. It catalyses the reaction L-kynurenine + 2-oxoglutarate = kynurenate + L-glutamate + H2O. In terms of biological role, catalyzes the irreversible transamination of the L-tryptophan metabolite L-kynurenine to form kynurenic acid (KA). As a member of the malate-aspartate shuttle, it has a key role in the intracellular NAD(H) redox balance. Is important for metabolite exchange between mitochondria and cytosol, and for amino acid metabolism. Facilitates cellular uptake of long-chain free fatty acids. This chain is Aspartate aminotransferase, mitochondrial (GOT2), found in Oryctolagus cuniculus (Rabbit).